A 360-amino-acid polypeptide reads, in one-letter code: Protein YIM1-1 (360 aa).

This sequence belongs to the YIM1 family.

Its subcellular location is the lipid droplet. It localises to the mitochondrion. The protein is Protein YIM1-1 (YIM1-1) of Lachancea thermotolerans (strain ATCC 56472 / CBS 6340 / NRRL Y-8284) (Yeast).